The sequence spans 424 residues: Enolase (424 aa).

Glutamine 162 contacts (2R)-2-phosphoglycerate. Glutamate 204 functions as the Proton donor in the catalytic mechanism. 3 residues coordinate Mg(2+): aspartate 241, glutamate 284, and aspartate 311. (2R)-2-phosphoglycerate-binding residues include lysine 336, arginine 365, serine 366, and lysine 387. The active-site Proton acceptor is the lysine 336.

The protein belongs to the enolase family. The cofactor is Mg(2+).

The protein resides in the cytoplasm. It is found in the secreted. Its subcellular location is the cell surface. The catalysed reaction is (2R)-2-phosphoglycerate = phosphoenolpyruvate + H2O. It functions in the pathway carbohydrate degradation; glycolysis; pyruvate from D-glyceraldehyde 3-phosphate: step 4/5. In terms of biological role, catalyzes the reversible conversion of 2-phosphoglycerate (2-PG) into phosphoenolpyruvate (PEP). It is essential for the degradation of carbohydrates via glycolysis. The sequence is that of Enolase from Maricaulis maris (strain MCS10) (Caulobacter maris).